Reading from the N-terminus, the 879-residue chain is mRNA-binding protein PUF3 (879 aa).

Thr83 is modified (phosphothreonine). A phosphoserine mark is found at Ser207 and Ser210. 3 disordered regions span residues 222-256, 344-417, and 443-512; these read ESDKNFNKLNRNTTNSGSLYHSSSNSGSSASLESE, PANE…QQQQ, and KKRN…QQTY. A compositionally biased stretch (low complexity) spans 237 to 255; that stretch reads SGSLYHSSSNSGSSASLES. Residues 370–395 show a composition bias toward pro residues; the sequence is SSPPNNSPFPFAYPNPMMFMPPPPLS. Low complexity-rich tracts occupy residues 398–417, 449–463, 472–491, and 501–512; these read QQQQQQQQQQQQEDQQQQQQ, NHPANNSNNANKQAN, TKNTSKKNASSKSNESTANN, and HSQSLQQQQQTY. The 359-residue stretch at 513-871 folds into the PUM-HD domain; sequence HRSPLLEQLR…RHLASVEKLA (359 aa). Pumilio repeat units follow at residues 538-573, 574-609, 610-645, 646-681, 682-717, 718-759, 760-795, and 807-844; these read DIFGHSLEFCKDQHGSRFIQRELATSPASEKEVIFN, EIRDDAIELSNDVFGNYVIQKFFEFGSKIQKNTLVD, QFKGNMKQLSLQMYACRVIQKALEYIDSNQRIELVL, ELSDSVLQMIKDQNGNHVIQKAIETIPIEKLPFILS, SLTGHIYHLSTHSYGCRVIQRLLEFGSSEDQESILN, ELKD…EIIE, TVANNVVEYSKHKFASNVVEKSILYGSKNQKDLIIS, and NLEDDSPMILMIKDQFANYVIQKLVNVSEGEGKKLIVI.

It belongs to the PUF3 family.

It localises to the mitochondrion outer membrane. The protein localises to the cytoplasm. Its function is as follows. RNA-binding protein involved in post-transcriptional regulation. Negatively regulates expression of COX17 by binding to the 3'-UTR of COX17 mRNA. Promotes decay of COX17 mRNA by enhancing its rate of deadenylation and subsequent turnover. Predominantly binds to mRNAs encoding mitochondrial proteins and localizes them to the vicinity of mitochondria for translation. Regulates mitochondrial biogenesis, motility and morphology. This is mRNA-binding protein PUF3 (PUF3) from Saccharomyces cerevisiae (strain ATCC 204508 / S288c) (Baker's yeast).